The following is a 390-amino-acid chain: Chorismate synthase 2 (390 aa).

Residues R39 and R45 each coordinate NADP(+). FMN-binding positions include 132–134 (RSS), 253–254 (NA), G298, 313–317 (KPIPT), and R339.

Belongs to the chorismate synthase family. As to quaternary structure, homotetramer. Requires FMNH2 as cofactor.

The catalysed reaction is 5-O-(1-carboxyvinyl)-3-phosphoshikimate = chorismate + phosphate. It participates in metabolic intermediate biosynthesis; chorismate biosynthesis; chorismate from D-erythrose 4-phosphate and phosphoenolpyruvate: step 7/7. Catalyzes the anti-1,4-elimination of the C-3 phosphate and the C-6 proR hydrogen from 5-enolpyruvylshikimate-3-phosphate (EPSP) to yield chorismate, which is the branch point compound that serves as the starting substrate for the three terminal pathways of aromatic amino acid biosynthesis. This reaction introduces a second double bond into the aromatic ring system. This is Chorismate synthase 2 from Bacillus cereus (strain ATCC 14579 / DSM 31 / CCUG 7414 / JCM 2152 / NBRC 15305 / NCIMB 9373 / NCTC 2599 / NRRL B-3711).